Here is a 542-residue protein sequence, read N- to C-terminus: Peptide chain release factor 3 (542 aa).

Residues 11–279 enclose the tr-type G domain; that stretch reads EKRRTFAIIS…AYVEYAPSPR (269 aa). GTP is bound by residues 20–27, 88–92, and 142–145; these read SHPDAGKT, DTPGH, and NKLD.

It belongs to the TRAFAC class translation factor GTPase superfamily. Classic translation factor GTPase family. PrfC subfamily.

The protein resides in the cytoplasm. Its function is as follows. Increases the formation of ribosomal termination complexes and stimulates activities of RF-1 and RF-2. It binds guanine nucleotides and has strong preference for UGA stop codons. It may interact directly with the ribosome. The stimulation of RF-1 and RF-2 is significantly reduced by GTP and GDP, but not by GMP. The polypeptide is Peptide chain release factor 3 (Nitrosococcus oceani (strain ATCC 19707 / BCRC 17464 / JCM 30415 / NCIMB 11848 / C-107)).